Consider the following 140-residue polypeptide: MNNQPSVLFVCVGNGGKSQMAAALAKKHAGDALKVYSAGTKPGTKLNQQSLDSIAEVGADMSQGFPKGIDQELIKRVDRVVILGAEAQLEMPIDANGILQRWVTDEPSERGIEGMERMRLVRDDIDARVQNLVAELTQNA.

This sequence belongs to the low molecular weight phosphotyrosine protein phosphatase family.

Its subcellular location is the cytoplasm. It carries out the reaction mycothiol + arsenate = arseno-mycothiol + H2O. In terms of biological role, involved in defense against toxic arsenate. Involved in the mycothiol/myoredoxin redox pathway which uses a mycothioltransferase mechanism; facilitates adduct formation between arsenate and mycothiol. In Corynebacterium glutamicum (strain ATCC 13032 / K051), this protein is Arsenate-mycothiol transferase ArsC1 (arsC1).